A 363-amino-acid polypeptide reads, in one-letter code: tRNA(Met) cytidine acetate ligase (363 aa).

ATP is bound by residues 7–20 (IAEF…HKYL), glycine 96, asparagine 152, and arginine 175.

Belongs to the TmcAL family.

The protein resides in the cytoplasm. It carries out the reaction cytidine(34) in elongator tRNA(Met) + acetate + ATP = N(4)-acetylcytidine(34) in elongator tRNA(Met) + AMP + diphosphate. In terms of biological role, catalyzes the formation of N(4)-acetylcytidine (ac(4)C) at the wobble position of elongator tRNA(Met), using acetate and ATP as substrates. First activates an acetate ion to form acetyladenylate (Ac-AMP) and then transfers the acetyl group to tRNA to form ac(4)C34. The polypeptide is tRNA(Met) cytidine acetate ligase (Streptococcus gordonii (strain Challis / ATCC 35105 / BCRC 15272 / CH1 / DL1 / V288)).